The sequence spans 223 residues: UPF0441 protein ETA_04310 (223 aa).

The tract at residues Tyr166 to Gly223 is disordered. Residues Ala202–Gly223 are compositionally biased toward polar residues.

It belongs to the UPF0441 family.

The sequence is that of UPF0441 protein ETA_04310 from Erwinia tasmaniensis (strain DSM 17950 / CFBP 7177 / CIP 109463 / NCPPB 4357 / Et1/99).